The primary structure comprises 166 residues: Transcription antitermination protein NusB (166 aa).

Over residues Met-1–Asp-18 the composition is skewed to basic and acidic residues. Residues Met-1–Glu-30 are disordered.

Belongs to the NusB family.

In terms of biological role, involved in transcription antitermination. Required for transcription of ribosomal RNA (rRNA) genes. Binds specifically to the boxA antiterminator sequence of the ribosomal RNA (rrn) operons. This is Transcription antitermination protein NusB from Pseudomonas fluorescens (strain Pf0-1).